Reading from the N-terminus, the 299-residue chain is Taste receptor type 2 member 4 (299 aa).

At 1-9 (MLWLFYSSA) the chain is on the extracellular side. A helical membrane pass occupies residues 10 to 30 (IIASVILDFVGIIMSLFITVV). Residues 31–46 (NYKTWVKSHRISSSER) are Cytoplasmic-facing. Residues 47-67 (ILFSLGITRFFMLALFLVNTI) form a helical membrane-spanning segment. Over 68-81 (YFVSSNKERSVYLS) the chain is Extracellular. The helical transmembrane segment at 82-102 (AFFVLCFMFLDSSSLWFVTLL) threads the bilayer. Topologically, residues 103–131 (NSLYCVKITNFQHSVFLLLKRNISPKIPR) are cytoplasmic. A helical membrane pass occupies residues 132–152 (LLPACVLISAFTTCLYITLSQ). At 153–172 (ASPFPELVTKRNNTSFNISE) the chain is on the extracellular side. Asn164, Asn165, and Asn169 each carry an N-linked (GlcNAc...) asparagine glycan. A helical membrane pass occupies residues 173 to 193 (GILSLVVSFVLSSSLQFIINV). At 194-230 (TSASLLIYSLRRHIRKMQKNATGFWNPQTEAHVGAMK) the chain is on the cytoplasmic side. Residues 231 to 251 (LMIYFLILYIPYSVATLVQYL) form a helical membrane-spanning segment. The Extracellular portion of the chain corresponds to 252-262 (PFYAGMDMGTK). The helical transmembrane segment at 263–283 (SICLIFATLYSPGHSVLIIIT) threads the bilayer. Residues 284-299 (HPKLKTTAKKILCFKK) are Cytoplasmic-facing.

It belongs to the G-protein coupled receptor T2R family.

It is found in the membrane. The protein resides in the cell projection. The protein localises to the cilium membrane. Functionally, gustducin-coupled receptor implicated in the perception of bitter compounds in the oral cavity and the gastrointestinal tract. Signals through PLCB2 and the calcium-regulated cation channel TRPM5. In airway epithelial cells, binding of denatonium increases the intracellular calcium ion concentration and stimulates ciliary beat frequency. This is Taste receptor type 2 member 4 (TAS2R4) from Papio hamadryas (Hamadryas baboon).